Consider the following 55-residue polypeptide: uncharacterized protein (55 aa).

Residues 1-25 form a disordered region; sequence MKNNDKKKEVQRKYREEIKKKKQKN. Residues 35 to 55 form a helical membrane-spanning segment; the sequence is TIIVVTIIVLFIFFTYTLQGF.

It localises to the membrane. This is an uncharacterized protein from Bacillus subtilis (strain 168).